Consider the following 189-residue polypeptide: Elongation factor P-like protein (189 aa).

The protein belongs to the elongation factor P family.

This is Elongation factor P-like protein from Vibrio atlanticus (strain LGP32) (Vibrio splendidus (strain Mel32)).